Here is a 339-residue protein sequence, read N- to C-terminus: Uroporphyrinogen decarboxylase (339 aa).

Residues 21-25, Asp71, Tyr146, Ser201, and His316 contribute to the substrate site; that span reads RQAGR.

It belongs to the uroporphyrinogen decarboxylase family. As to quaternary structure, homodimer.

The protein localises to the cytoplasm. It carries out the reaction uroporphyrinogen III + 4 H(+) = coproporphyrinogen III + 4 CO2. The protein operates within porphyrin-containing compound metabolism; protoporphyrin-IX biosynthesis; coproporphyrinogen-III from 5-aminolevulinate: step 4/4. Catalyzes the decarboxylation of four acetate groups of uroporphyrinogen-III to yield coproporphyrinogen-III. The protein is Uroporphyrinogen decarboxylase of Rickettsia canadensis (strain McKiel).